The primary structure comprises 310 residues: tRNA uridine(34) hydroxylase (310 aa).

The Rhodanese domain occupies 123-217; that stretch reads ADPDVVVIDV…YLEKVPEDES (95 aa). Catalysis depends on Cys177, which acts as the Cysteine persulfide intermediate.

The protein belongs to the TrhO family.

The catalysed reaction is uridine(34) in tRNA + AH2 + O2 = 5-hydroxyuridine(34) in tRNA + A + H2O. In terms of biological role, catalyzes oxygen-dependent 5-hydroxyuridine (ho5U) modification at position 34 in tRNAs. In Acaryochloris marina (strain MBIC 11017), this protein is tRNA uridine(34) hydroxylase.